The following is a 102-amino-acid chain: Large ribosomal subunit protein bL21 (102 aa).

This sequence belongs to the bacterial ribosomal protein bL21 family. As to quaternary structure, part of the 50S ribosomal subunit. Contacts protein L20.

Its function is as follows. This protein binds to 23S rRNA in the presence of protein L20. The protein is Large ribosomal subunit protein bL21 of Zymomonas mobilis subsp. mobilis (strain ATCC 31821 / ZM4 / CP4).